A 414-amino-acid polypeptide reads, in one-letter code: Serine/threonine transporter SstT (414 aa).

8 helical membrane-spanning segments follow: residues 16–36, 46–66, 84–104, 143–163, 180–200, 219–239, 300–320, and 332–352; these read GSLVKQILVGLVLGILLAWIS, LGTLFVGALKAVAPVLVLMLV, ILFLYLLGTFSAALAAVVFSF, ALLNANYIGILVWAVSLGFAL, AVTFMVKLVIRFAPIGIFGLV, LVVLIGCMLLVALVVNPLLVF, MAGAAITITVLTLAAVHTLGV, and VVASLCACGASGVAGGSLLLI.

It belongs to the dicarboxylate/amino acid:cation symporter (DAACS) (TC 2.A.23) family.

The protein localises to the cell inner membrane. It carries out the reaction L-serine(in) + Na(+)(in) = L-serine(out) + Na(+)(out). The catalysed reaction is L-threonine(in) + Na(+)(in) = L-threonine(out) + Na(+)(out). In terms of biological role, involved in the import of serine and threonine into the cell, with the concomitant import of sodium (symport system). The sequence is that of Serine/threonine transporter SstT from Salmonella schwarzengrund (strain CVM19633).